Reading from the N-terminus, the 47-residue chain is MIYDVNSPLFRSFLSQKGGSSDKRKTEEQKPKEHRPKASENKPIMTE.

The disordered stretch occupies residues 1-47 (MIYDVNSPLFRSFLSQKGGSSDKRKTEEQKPKEHRPKASENKPIMTE). Residues 20-40 (SSDKRKTEEQKPKEHRPKASE) are compositionally biased toward basic and acidic residues.

In terms of tissue distribution, abundant in radicals and epicotyls of seedlings and higher in the roots than in stems and leaves of mature plants.

This chain is Wound-induced basic protein (PR4), found in Phaseolus vulgaris (Kidney bean).